The chain runs to 189 residues: UPF0398 protein LCK_00599 (189 aa).

Belongs to the UPF0398 family.

The sequence is that of UPF0398 protein LCK_00599 from Leuconostoc citreum (strain KM20).